Here is a 67-residue protein sequence, read N- to C-terminus: Large ribosomal subunit protein uL30 (67 aa).

It belongs to the universal ribosomal protein uL30 family. As to quaternary structure, part of the 50S ribosomal subunit.

This is Large ribosomal subunit protein uL30 from Hamiltonella defensa subsp. Acyrthosiphon pisum (strain 5AT).